Consider the following 312-residue polypeptide: Methionyl-tRNA formyltransferase (312 aa).

Position 112-115 (112-115 (SLLP)) interacts with (6S)-5,6,7,8-tetrahydrofolate.

Belongs to the Fmt family.

The enzyme catalyses L-methionyl-tRNA(fMet) + (6R)-10-formyltetrahydrofolate = N-formyl-L-methionyl-tRNA(fMet) + (6S)-5,6,7,8-tetrahydrofolate + H(+). Its function is as follows. Attaches a formyl group to the free amino group of methionyl-tRNA(fMet). The formyl group appears to play a dual role in the initiator identity of N-formylmethionyl-tRNA by promoting its recognition by IF2 and preventing the misappropriation of this tRNA by the elongation apparatus. The protein is Methionyl-tRNA formyltransferase of Syntrophus aciditrophicus (strain SB).